Consider the following 154-residue polypeptide: Ribosome maturation factor RimP (154 aa).

This sequence belongs to the RimP family.

Its subcellular location is the cytoplasm. Required for maturation of 30S ribosomal subunits. The chain is Ribosome maturation factor RimP from Prochlorococcus marinus (strain MIT 9303).